Consider the following 322-residue polypeptide: Ribosomal RNA small subunit methyltransferase H (322 aa).

Residues 43 to 45 (GGY), D60, F86, D104, and Q111 contribute to the S-adenosyl-L-methionine site.

Belongs to the methyltransferase superfamily. RsmH family.

It is found in the cytoplasm. It catalyses the reaction cytidine(1402) in 16S rRNA + S-adenosyl-L-methionine = N(4)-methylcytidine(1402) in 16S rRNA + S-adenosyl-L-homocysteine + H(+). Its function is as follows. Specifically methylates the N4 position of cytidine in position 1402 (C1402) of 16S rRNA. In Caulobacter sp. (strain K31), this protein is Ribosomal RNA small subunit methyltransferase H.